The primary structure comprises 599 residues: Aspartate--tRNA(Asp/Asn) ligase (599 aa).

Glu183 contacts L-aspartate. Residues 207-210 (QIFK) form an aspartate region. Arg229 is an L-aspartate binding site. ATP is bound by residues 229–231 (RDE) and Gln238. His456 is a binding site for L-aspartate. Glu490 serves as a coordination point for ATP. L-aspartate is bound at residue Arg497. 542–545 (GLDR) lines the ATP pocket.

The protein belongs to the class-II aminoacyl-tRNA synthetase family. Type 1 subfamily. As to quaternary structure, homodimer.

It localises to the cytoplasm. The catalysed reaction is tRNA(Asx) + L-aspartate + ATP = L-aspartyl-tRNA(Asx) + AMP + diphosphate. Functionally, aspartyl-tRNA synthetase with relaxed tRNA specificity since it is able to aspartylate not only its cognate tRNA(Asp) but also tRNA(Asn). Reaction proceeds in two steps: L-aspartate is first activated by ATP to form Asp-AMP and then transferred to the acceptor end of tRNA(Asp/Asn). This chain is Aspartate--tRNA(Asp/Asn) ligase, found in Protochlamydia amoebophila (strain UWE25).